Consider the following 76-residue polypeptide: UPF0248 protein MmarC5_1387 (76 aa).

Belongs to the UPF0248 family.

The protein is UPF0248 protein MmarC5_1387 of Methanococcus maripaludis (strain C5 / ATCC BAA-1333).